Reading from the N-terminus, the 267-residue chain is tRNA pseudouridine synthase A (267 aa).

The active-site Nucleophile is the Asp-53. Residue Tyr-111 participates in substrate binding.

The protein belongs to the tRNA pseudouridine synthase TruA family. Homodimer.

It carries out the reaction uridine(38/39/40) in tRNA = pseudouridine(38/39/40) in tRNA. Functionally, formation of pseudouridine at positions 38, 39 and 40 in the anticodon stem and loop of transfer RNAs. The protein is tRNA pseudouridine synthase A of Alcanivorax borkumensis (strain ATCC 700651 / DSM 11573 / NCIMB 13689 / SK2).